Consider the following 695-residue polypeptide: D-(-)-3-hydroxybutyrate oligomer hydrolase (695 aa).

An N-terminal signal peptide occupies residues 1-17; the sequence is MTTHGWGTRILLGAALA. The active-site Charge relay system is the S308.

It belongs to the D-(-)-3-hydroxybutyrate oligomer hydrolase family.

Its subcellular location is the secreted. The catalysed reaction is (3R)-hydroxybutanoate dimer + H2O = 2 (R)-3-hydroxybutanoate + H(+). It participates in lipid metabolism; butanoate metabolism. Functionally, participates in the degradation of poly-3-hydroxybutyrate (PHB). It works downstream of poly(3-hydroxybutyrate) depolymerase, hydrolyzing D(-)-3-hydroxybutyrate oligomers of various length (3HB-oligomers) into 3HB-monomers. This chain is D-(-)-3-hydroxybutyrate oligomer hydrolase, found in Burkholderia ambifaria (strain ATCC BAA-244 / DSM 16087 / CCUG 44356 / LMG 19182 / AMMD) (Burkholderia cepacia (strain AMMD)).